The sequence spans 60 residues: Cecropin-B1 (60 aa).

Residues 1 to 24 (MNFSKVFALVLLIGLVLLTGHTEA) form the signal peptide.

The protein belongs to the cecropin family.

The protein resides in the secreted. In terms of biological role, putative antimicrobial peptide. Partially neutralizes lipopolysaccharides (LPS). Exhibits anti-inflammatory properties: inhibits LPS-induced iNOS/NOS2 transcription, nitric oxide (NO) and pro-inflammatory cytokine production in mouse macrophages and human peripheral blood mononuclear cells (PBMCs); inhibits LPS-induced activation of MAPK and NF-kappa-B signaling pathways in mouse macrophages. In Aedes aegypti (Yellowfever mosquito), this protein is Cecropin-B1.